Consider the following 32-residue polypeptide: Photosystem II reaction center protein Z (32 aa).

The chain crosses the membrane as a helical span at residues 9–31 (FILLGAVTWAILVFIVGSLNSYV).

It belongs to the PsbZ family. In terms of assembly, PSII is composed of 1 copy each of membrane proteins PsbA, PsbB, PsbC, PsbD, PsbE, PsbF, PsbH, PsbI, PsbJ, PsbK, PsbL, PsbM, PsbT, PsbY, PsbZ, Psb30/Ycf12, at least 3 peripheral proteins of the oxygen-evolving complex and a large number of cofactors. It forms dimeric complexes.

The protein resides in the plastid. Its subcellular location is the chloroplast thylakoid membrane. Functionally, may control the interaction of photosystem II (PSII) cores with the light-harvesting antenna, regulates electron flow through the 2 photosystem reaction centers. PSII is a light-driven water plastoquinone oxidoreductase, using light energy to abstract electrons from H(2)O, generating a proton gradient subsequently used for ATP formation. This chain is Photosystem II reaction center protein Z, found in Euglena stellata.